The chain runs to 105 residues: Pyrimidine/purine nucleoside phosphorylase (105 aa).

This sequence belongs to the nucleoside phosphorylase PpnP family.

It catalyses the reaction a purine D-ribonucleoside + phosphate = a purine nucleobase + alpha-D-ribose 1-phosphate. The enzyme catalyses adenosine + phosphate = alpha-D-ribose 1-phosphate + adenine. It carries out the reaction cytidine + phosphate = cytosine + alpha-D-ribose 1-phosphate. The catalysed reaction is guanosine + phosphate = alpha-D-ribose 1-phosphate + guanine. It catalyses the reaction inosine + phosphate = alpha-D-ribose 1-phosphate + hypoxanthine. The enzyme catalyses thymidine + phosphate = 2-deoxy-alpha-D-ribose 1-phosphate + thymine. It carries out the reaction uridine + phosphate = alpha-D-ribose 1-phosphate + uracil. The catalysed reaction is xanthosine + phosphate = alpha-D-ribose 1-phosphate + xanthine. Catalyzes the phosphorolysis of diverse nucleosides, yielding D-ribose 1-phosphate and the respective free bases. Can use uridine, adenosine, guanosine, cytidine, thymidine, inosine and xanthosine as substrates. Also catalyzes the reverse reactions. The polypeptide is Pyrimidine/purine nucleoside phosphorylase (Albidiferax ferrireducens (strain ATCC BAA-621 / DSM 15236 / T118) (Rhodoferax ferrireducens)).